Consider the following 206-residue polypeptide: Large ribosomal subunit protein uL3 (206 aa).

The tract at residues 122–154 is disordered; sequence VVKRHGHAGGPGGHGSRFHRHPGSMGANSTPSR.

The protein belongs to the universal ribosomal protein uL3 family. In terms of assembly, part of the 50S ribosomal subunit. Forms a cluster with proteins L14 and L19.

One of the primary rRNA binding proteins, it binds directly near the 3'-end of the 23S rRNA, where it nucleates assembly of the 50S subunit. This is Large ribosomal subunit protein uL3 from Leptospira borgpetersenii serovar Hardjo-bovis (strain JB197).